A 327-amino-acid chain; its full sequence is HTH-type transcriptional regulator EbgR (327 aa).

The region spanning 1 to 57 is the HTH lacI-type domain; sequence MATLKDIAIEAGVSLATVSRVLNDDPTLNVKEETKHRILEIAEKLEYKTSSARKLQT. The H-T-H motif DNA-binding region spans 4-23; sequence LKDIAIEAGVSLATVSRVLN.

Functionally, repressor for beta galactosidase alpha and beta subunits (ebgA and ebgC). Binds lactose as an inducer. This chain is HTH-type transcriptional regulator EbgR (ebgR), found in Escherichia coli (strain K12).